Consider the following 406-residue polypeptide: Nodal homolog (406 aa).

An N-terminal signal peptide occupies residues 1 to 18 (MAFLTAVLYLGFACISQG). A propeptide spanning residues 19–281 (LPTWPDRVES…RVPGIRRHRR (263 aa)) is cleaved from the precursor. Asn71, Asn136, and Asn172 each carry an N-linked (GlcNAc...) asparagine glycan. The tract at residues 195–222 (KERAERGSGMSNAEFIDAPGPSQQYNPH) is disordered. 3 disulfides stabilise this stretch: Cys306–Cys372, Cys335–Cys403, and Cys339–Cys405. A glycan (N-linked (GlcNAc...) asparagine) is linked at Asn344.

This sequence belongs to the TGF-beta family. As to quaternary structure, homodimer; disulfide-linked. Interacts with, and is inhibited by cer1 and gdf10/bmp3b. In the first phase of expression, localized to the vegetal region of the blastula. During gastrulation (stage 10.5), this expression disappears and instead becomes localized to the dorsal marginal zone, with enrichment in the organizer. During the second phase of expression in neurulae and tailbud embryos, expression restarts firstly in two symmetric patches near the posterior end of the notochord, and then in a large asymmetrical domain in the left lateral plate mesoderm.

Its subcellular location is the secreted. Cooperation and regulatory loops of multiple nodals are essential for mesendoderm patterning in early embryos. Essential for mesoderm formation and axial patterning during embryonic development. Activates the activin-like signaling pathway to induce dorsal and ventral mesoderm in animal cap ectoderm. In addition, also dorsalizes ventral marginal zone (VMZ) tissues during gastrulation. Acts in a downstream signaling cascade via cripto and cer1 to mediate cardiogenesis in embryonic mesoderm. Directs the orientation of the left-right axis by driving the left-specific gene cascade in the left lateral plate mesoderm. In Xenopus laevis (African clawed frog), this protein is Nodal homolog.